The primary structure comprises 374 residues: Cysteine-type anaerobic sulfatase-maturating enzyme (374 aa).

The 227-residue stretch at 1-227 (MKSLSMLIKP…LNKLFDLWFK (227 aa)) folds into the Radical SAM core domain. [4Fe-4S] cluster contacts are provided by Cys-15 and Cys-19. Residue Tyr-21 coordinates S-adenosyl-L-methionine. Cys-22 provides a ligand contact to [4Fe-4S] cluster. 4 residues coordinate S-adenosyl-L-methionine: Gly-66, Ser-122, Arg-134, and Leu-195. Residues Cys-255, Cys-261, and Cys-276 each contribute to the [4Fe-4S] cluster site. The active-site Proton acceptor is the Asp-277. Positions 317, 320, 326, 330, and 348 each coordinate [4Fe-4S] cluster.

This sequence belongs to the radical SAM superfamily. Anaerobic sulfatase-maturating enzyme family. The cofactor is [4Fe-4S] cluster.

It catalyses the reaction L-cysteinyl-[sulfatase] + S-adenosyl-L-methionine + H2O = 3-oxo-L-alanyl-[sulfatase] + hydrogen sulfide + 5'-deoxyadenosine + L-methionine + 2 H(+). It participates in protein modification; sulfatase oxidation. Involved in 'Cys-type' sulfatase maturation under anaerobic conditions. Catalyzes the post-translational modification of cysteine into 3-oxoalanine (also known as C(alpha)-formylglycine (FGly)), by a free radical chemical mechanism initiated via the reductive cleavage of S-adenosyl-L-methionine (SAM). In Clostridium novyi (strain NT), this protein is Cysteine-type anaerobic sulfatase-maturating enzyme.